The primary structure comprises 396 residues: Elongation factor Tu 1 (396 aa).

One can recognise a tr-type G domain in the interval 10–206 (KPHVNVGTIG…ALDSYIPLPE (197 aa)). The G1 stretch occupies residues 19-26 (GHVDHGKT). GTP is bound at residue 19-26 (GHVDHGKT). Threonine 26 serves as a coordination point for Mg(2+). Residues 60 to 64 (GITIN) are G2. A G3 region spans residues 81 to 84 (DCPG). GTP contacts are provided by residues 81–85 (DCPGH) and 136–139 (NKCD). Residues 136-139 (NKCD) form a G4 region. The interval 174-176 (SAK) is G5.

The protein belongs to the TRAFAC class translation factor GTPase superfamily. Classic translation factor GTPase family. EF-Tu/EF-1A subfamily. As to quaternary structure, monomer.

The protein localises to the cytoplasm. The enzyme catalyses GTP + H2O = GDP + phosphate + H(+). In terms of biological role, GTP hydrolase that promotes the GTP-dependent binding of aminoacyl-tRNA to the A-site of ribosomes during protein biosynthesis. The chain is Elongation factor Tu 1 from Albidiferax ferrireducens (strain ATCC BAA-621 / DSM 15236 / T118) (Rhodoferax ferrireducens).